The primary structure comprises 218 residues: Ribose-5-phosphate isomerase A (218 aa).

Residues 28 to 31 (TGST), 81 to 84 (DGAD), and 94 to 97 (KGGG) contribute to the substrate site. E103 acts as the Proton acceptor in catalysis. A substrate-binding site is contributed by K121.

The protein belongs to the ribose 5-phosphate isomerase family. In terms of assembly, homodimer.

It catalyses the reaction aldehydo-D-ribose 5-phosphate = D-ribulose 5-phosphate. The protein operates within carbohydrate degradation; pentose phosphate pathway; D-ribose 5-phosphate from D-ribulose 5-phosphate (non-oxidative stage): step 1/1. Its function is as follows. Catalyzes the reversible conversion of ribose-5-phosphate to ribulose 5-phosphate. This Aliivibrio fischeri (strain ATCC 700601 / ES114) (Vibrio fischeri) protein is Ribose-5-phosphate isomerase A.